The chain runs to 96 residues: Large ribosomal subunit protein bL27 (96 aa).

Residues 1–9 constitute a propeptide that is removed on maturation; the sequence is MLRLDLQFF. The segment at 13 to 35 is disordered; sequence KGVGSTKNGRDSQSKRLGAKRAD.

It belongs to the bacterial ribosomal protein bL27 family. Post-translationally, the N-terminus is cleaved by ribosomal processing cysteine protease Prp.

The sequence is that of Large ribosomal subunit protein bL27 from Bacillus cereus (strain B4264).